A 77-amino-acid polypeptide reads, in one-letter code: Acyl carrier protein (77 aa).

The region spanning 2–77 (SNIEERVKKI…AAIDYVSKNQ (76 aa)) is the Carrier domain. Ser-37 is modified (O-(pantetheine 4'-phosphoryl)serine).

The protein belongs to the acyl carrier protein (ACP) family. Post-translationally, 4'-phosphopantetheine is transferred from CoA to a specific serine of apo-ACP by AcpS. This modification is essential for activity because fatty acids are bound in thioester linkage to the sulfhydryl of the prosthetic group.

Its subcellular location is the cytoplasm. Its pathway is lipid metabolism; fatty acid biosynthesis. Carrier of the growing fatty acid chain in fatty acid biosynthesis. In Shewanella oneidensis (strain ATCC 700550 / JCM 31522 / CIP 106686 / LMG 19005 / NCIMB 14063 / MR-1), this protein is Acyl carrier protein.